A 307-amino-acid chain; its full sequence is Ribonuclease Z (307 aa).

Zn(2+)-binding residues include His63, His65, Asp67, His68, His141, Asp212, and His270. Asp67 serves as the catalytic Proton acceptor.

This sequence belongs to the RNase Z family. As to quaternary structure, homodimer. The cofactor is Zn(2+).

It catalyses the reaction Endonucleolytic cleavage of RNA, removing extra 3' nucleotides from tRNA precursor, generating 3' termini of tRNAs. A 3'-hydroxy group is left at the tRNA terminus and a 5'-phosphoryl group is left at the trailer molecule.. In terms of biological role, zinc phosphodiesterase, which displays some tRNA 3'-processing endonuclease activity. Probably involved in tRNA maturation, by removing a 3'-trailer from precursor tRNA. The chain is Ribonuclease Z from Bacillus cereus (strain ZK / E33L).